The sequence spans 43 residues: Histone H3 (43 aa).

The nucleosome is a histone octamer containing two molecules each of H2A, H2B, H3 and H4 assembled in one H3-H4 heterotetramer and two H2A-H2B heterodimers. The octamer wraps approximately 147 bp of DNA.

It is found in the nucleus. The protein resides in the chromosome. Functionally, core component of nucleosome. Nucleosomes wrap and compact DNA into chromatin, limiting DNA accessibility to the cellular machineries which require DNA as a template. Histones thereby play a central role in transcription regulation, DNA repair, DNA replication and chromosomal stability. DNA accessibility is regulated via a complex set of post-translational modifications of histones, also called histone code, and nucleosome remodeling. The chain is Histone H3 from Penaeus vannamei (Whiteleg shrimp).